Reading from the N-terminus, the 401-residue chain is Proline-rich protein 30 (401 aa).

The segment covering 69 to 80 has biased composition (polar residues); the sequence is PGPHFSSDSNSD. 3 disordered regions span residues 69–93, 129–191, and 357–401; these read PGPHFSSDSNSDFVPPHSSSHPRSS, SSSL…RGAG, and QSPK…KSPS. 2 stretches are compositionally biased toward low complexity: residues 83-93 and 129-147; these read PPHSSSHPRSS and SSSLSQLQHSSPHSCQSPS. Polar residues-rich tracts occupy residues 148–186 and 357–368; these read RLQDLQSPKITSPVPSSPSPRIQNNKQTWQWPQSGSIKS and QSPKPSQCSRSL.

The chain is Proline-rich protein 30 (Prr30) from Mus musculus (Mouse).